We begin with the raw amino-acid sequence, 362 residues long: Phosphate acyltransferase (362 aa).

The segment at 343–362 (TKKISTSTINPKTSETTKES) is disordered. Polar residues predominate over residues 344–356 (KKISTSTINPKTS).

Belongs to the PlsX family. Homodimer. Probably interacts with PlsY.

It is found in the cytoplasm. The catalysed reaction is a fatty acyl-[ACP] + phosphate = an acyl phosphate + holo-[ACP]. The protein operates within lipid metabolism; phospholipid metabolism. Functionally, catalyzes the reversible formation of acyl-phosphate (acyl-PO(4)) from acyl-[acyl-carrier-protein] (acyl-ACP). This enzyme utilizes acyl-ACP as fatty acyl donor, but not acyl-CoA. The polypeptide is Phosphate acyltransferase (Aster yellows witches'-broom phytoplasma (strain AYWB)).